The following is a 102-amino-acid chain: Small ribosomal subunit protein bS20 (102 aa).

Belongs to the bacterial ribosomal protein bS20 family.

Functionally, binds directly to 16S ribosomal RNA. The chain is Small ribosomal subunit protein bS20 from Gloeobacter violaceus (strain ATCC 29082 / PCC 7421).